A 546-amino-acid chain; its full sequence is NAD(P)H-quinone oxidoreductase chain 4 (546 aa).

Transmembrane regions (helical) follow at residues 24–44 (FPWL…IPFF), 56–76 (FALS…INGF), 108–128 (MPLI…AWPV), 132–152 (PKLF…VFAV), 156–176 (LLFF…LAIW), 188–208 (FIIY…AMGF), 232–252 (ILCY…VPLH), 263–283 (TAPV…YALL), 297–317 (FSPL…LTSF), 326–346 (IAYS…SFSS), 352–372 (AMLQ…LVGA), 396–416 (FALW…SGFV), 437–457 (VIMA…LLSM), and 484–504 (IYII…PRLV).

It belongs to the complex I subunit 4 family.

Its subcellular location is the cellular thylakoid membrane. It carries out the reaction a plastoquinone + NADH + (n+1) H(+)(in) = a plastoquinol + NAD(+) + n H(+)(out). It catalyses the reaction a plastoquinone + NADPH + (n+1) H(+)(in) = a plastoquinol + NADP(+) + n H(+)(out). Functionally, NDH-1 shuttles electrons from NAD(P)H, via FMN and iron-sulfur (Fe-S) centers, to quinones in the respiratory chain. The immediate electron acceptor for the enzyme in this species is believed to be plastoquinone. Couples the redox reaction to proton translocation (for every two electrons transferred, four hydrogen ions are translocated across the cytoplasmic membrane), and thus conserves the redox energy in a proton gradient. The protein is NAD(P)H-quinone oxidoreductase chain 4 of Prochlorococcus marinus subsp. pastoris (strain CCMP1986 / NIES-2087 / MED4).